An 87-amino-acid polypeptide reads, in one-letter code: Large ribosomal subunit protein bL27 (87 aa).

Positions 1 to 24 are disordered; sequence MATKKAGGSSRNGRDSAGRRLGVK.

It belongs to the bacterial ribosomal protein bL27 family.

This Rickettsia massiliae (strain Mtu5) protein is Large ribosomal subunit protein bL27.